A 162-amino-acid chain; its full sequence is Caveolin-2 (162 aa).

At 1–86 the chain is on the cytoplasmic side; that stretch reads MGLETEKADV…FEISKYVMYK (86 aa). Position 19 is a phosphotyrosine; by SRC (tyrosine 19). Residues serine 20 and serine 23 each carry the phosphoserine modification. Tyrosine 27 carries the post-translational modification Phosphotyrosine; by SRC. A Phosphoserine modification is found at serine 36. An intramembrane region (helical) is located at residues 87 to 107; sequence FLTVFLAIPLAFIAGILFATL. Residues 108–162 lie on the Cytoplasmic side of the membrane; the sequence is SCLHIWILMPFVKTCLMVLPSVQTIWKSVTDVIIAPLCTSVGRCFSSVSLQLSQD.

Belongs to the caveolin family. As to quaternary structure, monomer or homodimer. Interacts with CAV1; the interaction forms a stable heterooligomeric complex that is required for targeting to lipid rafts and for caveolae formation. Tyrosine phosphorylated forms do not form heterooligomers with the Tyr-19-phosphorylated form existing as a monomer or dimer, and the Tyr-27-form as a monomer only. Interacts (tyrosine phosphorylated form) with the SH2 domain-containing proteins, RASA1, NCK1 and SRC. Interacts (tyrosine phosphorylated form) with INSR, the interaction (Tyr-27-phosphorylated form) is increased on insulin stimulation. Interacts (Tyr-19 phosphorylated form) with MAPK1 (phosphorylated form); the interaction, promoted by insulin, leads to nuclear location and MAPK1 activation. Interacts with STAT3; the interaction is increased on insulin-induced tyrosine phosphorylation leading to STAT activation. Phosphorylated on serine and tyrosine residues. CAV1 promotes phosphorylation on Ser-23 which then targets the complex to the plasma membrane, lipid rafts and caveolae. Phosphorylation on Ser-36 appears to modulate mitosis in endothelial cells. Phosphorylation on both Tyr-19 and Tyr-27 is required for insulin-induced 'Ser-727' phosphorylation of STAT3 and its activation. Phosphorylation on Tyr-19 is required for insulin-induced phosphorylation of MAPK1 and DNA binding of STAT3. Tyrosine phosphorylation is induced by both EGF and insulin (By. similarity).

Its subcellular location is the nucleus. The protein localises to the cytoplasm. It localises to the golgi apparatus membrane. It is found in the cell membrane. The protein resides in the membrane. Its subcellular location is the caveola. Functionally, may act as a scaffolding protein within caveolar membranes. Interacts directly with G-protein alpha subunits and can functionally regulate their activity. Acts as an accessory protein in conjunction with CAV1 in targeting to lipid rafts and driving caveolae formation. The Ser-36 phosphorylated form has a role in modulating mitosis in endothelial cells. Positive regulator of cellular mitogenesis of the MAPK signaling pathway. Required for the insulin-stimulated nuclear translocation and activation of MAPK1 and STAT3, and the subsequent regulation of cell cycle progression. In Pan troglodytes (Chimpanzee), this protein is Caveolin-2 (CAV2).